The chain runs to 100 residues: Integration host factor subunit alpha (100 aa).

The interval 53-73 (FDLRDKRQRPGRNPKTGEEIP) is disordered.

This sequence belongs to the bacterial histone-like protein family. Heterodimer of an alpha and a beta chain.

In terms of biological role, this protein is one of the two subunits of integration host factor, a specific DNA-binding protein that functions in genetic recombination as well as in transcriptional and translational control. This chain is Integration host factor subunit alpha, found in Pseudomonas aeruginosa (strain LESB58).